Reading from the N-terminus, the 648-residue chain is Transketolase (648 aa).

His-22 contacts substrate. Thiamine diphosphate-binding positions include His-62 and 109-111; that span reads GPL. Asp-150 is a Mg(2+) binding site. Residues Gly-151 and Asn-180 each coordinate thiamine diphosphate. The Mg(2+) site is built by Asn-180 and Val-182. 3 residues coordinate substrate: His-252, Arg-345, and Ser-372. His-252 serves as a coordination point for thiamine diphosphate. Glu-397 serves as the catalytic Proton donor. A thiamine diphosphate-binding site is contributed by Phe-423. Residues His-447, Asp-455, and Arg-506 each contribute to the substrate site.

This sequence belongs to the transketolase family. Homodimer. It depends on Mg(2+) as a cofactor. Ca(2+) is required as a cofactor. The cofactor is Mn(2+). Co(2+) serves as cofactor. Requires thiamine diphosphate as cofactor.

The enzyme catalyses D-sedoheptulose 7-phosphate + D-glyceraldehyde 3-phosphate = aldehydo-D-ribose 5-phosphate + D-xylulose 5-phosphate. Catalyzes the transfer of a two-carbon ketol group from a ketose donor to an aldose acceptor, via a covalent intermediate with the cofactor thiamine pyrophosphate. This chain is Transketolase (tkt), found in Mycoplasma pneumoniae (strain ATCC 29342 / M129 / Subtype 1) (Mycoplasmoides pneumoniae).